A 287-amino-acid chain; its full sequence is Undecaprenyl-diphosphatase (287 aa).

8 helical membrane-spanning segments follow: residues 1-21 (MALW…FLPV), 49-69 (MILF…VVFA), 101-121 (LFLL…TLKA), 126-146 (VFAN…LLFW), 160-180 (TGVG…MPGL), 203-223 (YSFF…AIEV), 232-252 (VSVA…IVSL), and 267-287 (FSFY…DLPI).

Belongs to the UppP family.

It is found in the cell inner membrane. The enzyme catalyses di-trans,octa-cis-undecaprenyl diphosphate + H2O = di-trans,octa-cis-undecaprenyl phosphate + phosphate + H(+). Catalyzes the dephosphorylation of undecaprenyl diphosphate (UPP). Confers resistance to bacitracin. This chain is Undecaprenyl-diphosphatase, found in Halorhodospira halophila (strain DSM 244 / SL1) (Ectothiorhodospira halophila (strain DSM 244 / SL1)).